We begin with the raw amino-acid sequence, 95 residues long: Pyrimidine/purine nucleoside phosphorylase (95 aa).

Belongs to the nucleoside phosphorylase PpnP family.

It catalyses the reaction a purine D-ribonucleoside + phosphate = a purine nucleobase + alpha-D-ribose 1-phosphate. The catalysed reaction is adenosine + phosphate = alpha-D-ribose 1-phosphate + adenine. The enzyme catalyses cytidine + phosphate = cytosine + alpha-D-ribose 1-phosphate. It carries out the reaction guanosine + phosphate = alpha-D-ribose 1-phosphate + guanine. It catalyses the reaction inosine + phosphate = alpha-D-ribose 1-phosphate + hypoxanthine. The catalysed reaction is thymidine + phosphate = 2-deoxy-alpha-D-ribose 1-phosphate + thymine. The enzyme catalyses uridine + phosphate = alpha-D-ribose 1-phosphate + uracil. It carries out the reaction xanthosine + phosphate = alpha-D-ribose 1-phosphate + xanthine. In terms of biological role, catalyzes the phosphorolysis of diverse nucleosides, yielding D-ribose 1-phosphate and the respective free bases. Can use uridine, adenosine, guanosine, cytidine, thymidine, inosine and xanthosine as substrates. Also catalyzes the reverse reactions. The sequence is that of Pyrimidine/purine nucleoside phosphorylase from Yersinia enterocolitica serotype O:8 / biotype 1B (strain NCTC 13174 / 8081).